A 70-amino-acid chain; its full sequence is Guanine nucleotide-binding protein G(I)/G(S)/G(O) subunit gamma-8 (70 aa).

Residue C67 is modified to Cysteine methyl ester. A lipid anchor (S-geranylgeranyl cysteine) is attached at C67. A propeptide spans 68 to 70 (removed in mature form); that stretch reads VLL.

Belongs to the G protein gamma family. In terms of assembly, g proteins are composed of 3 units, alpha, beta and gamma.

Its subcellular location is the cell membrane. Its function is as follows. Guanine nucleotide-binding proteins (G proteins) are involved as a modulator or transducer in various transmembrane signaling systems. The beta and gamma chains are required for the GTPase activity, for replacement of GDP by GTP, and for G protein-effector interaction. This Homo sapiens (Human) protein is Guanine nucleotide-binding protein G(I)/G(S)/G(O) subunit gamma-8 (GNG8).